A 351-amino-acid chain; its full sequence is Translation initiation factor eIF2B subunit beta (351 aa).

It belongs to the eIF-2B alpha/beta/delta subunits family. Component of the translation initiation factor 2B (eIF2B) complex which is a heterodecamer of two sets of five different subunits: alpha, beta, gamma, delta and epsilon. Subunits alpha, beta and delta comprise a regulatory subcomplex and subunits epsilon and gamma comprise a catalytic subcomplex. Within the complex, the hexameric regulatory complex resides at the center, with the two heterodimeric catalytic subcomplexes bound on opposite sides.

The protein resides in the cytoplasm. Its subcellular location is the cytosol. With respect to regulation, activated by the chemical integrated stress response (ISR) inhibitor ISRIB which stimulates guanine nucleotide exchange factor activity for both phosphorylated and unphosphorylated eIF2. Its function is as follows. Acts as a component of the translation initiation factor 2B (eIF2B) complex, which catalyzes the exchange of GDP for GTP on eukaryotic initiation factor 2 (eIF2) gamma subunit. Its guanine nucleotide exchange factor activity is repressed when bound to eIF2 complex phosphorylated on the alpha subunit, thereby limiting the amount of methionyl-initiator methionine tRNA available to the ribosome and consequently global translation is repressed. The protein is Translation initiation factor eIF2B subunit beta (EIF2B2) of Oryctolagus cuniculus (Rabbit).